A 750-amino-acid chain; its full sequence is MKFGKDFVRQMIPEWQQAYMDYAGLKSILQEIQTSRKRSERPGILKRKLSGSRNFSGLTKRYSRTASTREPEIQDILVHATTGDDGFERYETTILEVAEAGRESELAFFKTLDLEFDKVNHFYRSKVEEMVKEAVVLNKQMDALIAFRIKVERPSSSWSCSETVSVDMNALDSNDQRNTLAEEMGIRVEGNGSNGGDSTKESVPQVLSVLERIRLNKTQETPLSTIKNVLKLSNQEELKFTRENLKKIEERLKNVFIEFYRKLRHLKNYSFLNTLAISKIMKKYDKIASRSAAKPYMEMVDKSYLTSSDEINKLMLRVESTFVEHFAGLNRSKGMNLLRPKVKKEKHRITFSTGFFVGCTVSLVVALVMFIHARNIMGAVGHKVYMETMFPLYSLFAFVVLHMIMYASNIYFWKRYRVNYPFIFGFKEGTELGYRHVLLLSFGLGTLALCAVLINLDMEMDPNTNDYKTMTELLPMFILALVVAILFCPFNIFYRSSRVFFLMVVFRCIAAPLYKVNLPDFFLADQLTSQVQALRSLEFYICYYGWGDFKHRQNTCRSSDVYSTFYFIVAVIPYWSRFLQCVRRLIEENDSSQGYNALKYLLTVVAVCLRTAYSFNRGNIWKISAWVFSALATFYGTYWDIVFDWGLLHRPSKHLLREKLLVPHKAVYYVAIVLNIVLRMAWLQTVLDFNLSFLHRETMIALLAALEIIRRGIWNFFRLENEHLNNVGKFRAFKSVPLPFNYNEEEDRDS.

The region spanning 1-298 (MKFGKDFVRQ…SRSAAKPYME (298 aa)) is the SPX domain. The Cytoplasmic segment spans residues 1–350 (MKFGKDFVRQ…KVKKEKHRIT (350 aa)). A helical transmembrane segment spans residues 351–371 (FSTGFFVGCTVSLVVALVMFI). At 372–391 (HARNIMGAVGHKVYMETMFP) the chain is on the extracellular side. A helical transmembrane segment spans residues 392 to 412 (LYSLFAFVVLHMIMYASNIYF). Residues 413 to 435 (WKRYRVNYPFIFGFKEGTELGYR) are Cytoplasmic-facing. Residues 436–456 (HVLLLSFGLGTLALCAVLINL) form a helical membrane-spanning segment. The Extracellular segment spans residues 457–472 (DMEMDPNTNDYKTMTE). A helical membrane pass occupies residues 473–493 (LLPMFILALVVAILFCPFNIF). Residues 494 to 622 (YRSSRVFFLM…YSFNRGNIWK (129 aa)) are Cytoplasmic-facing. One can recognise an EXS domain in the interval 557-750 (RSSDVYSTFY…NYNEEEDRDS (194 aa)). A helical transmembrane segment spans residues 623–643 (ISAWVFSALATFYGTYWDIVF). Over 644–666 (DWGLLHRPSKHLLREKLLVPHKA) the chain is Extracellular. A helical transmembrane segment spans residues 667 to 687 (VYYVAIVLNIVLRMAWLQTVL). Residues 688–750 (DFNLSFLHRE…NYNEEEDRDS (63 aa)) are Cytoplasmic-facing.

It belongs to the SYG1 (TC 2.A.94) family. In terms of tissue distribution, expressed in root tips, vascular cylinders of roots and filaments, leaf hydathodes, stem, receptacle and stigma apex.

Its subcellular location is the cell membrane. Functionally, may transport inorganic phosphate (Pi). This chain is Phosphate transporter PHO1 homolog 7 (PHO1-H7), found in Arabidopsis thaliana (Mouse-ear cress).